The sequence spans 957 residues: Isoleucine--tRNA ligase (957 aa).

Positions 57-67 match the 'HIGH' region motif; it reads PYANGDIHIGH. Glu594 lines the L-isoleucyl-5'-AMP pocket. A 'KMSKS' region motif is present at residues 635-639; the sequence is KMSKS. Position 638 (Lys638) interacts with ATP. Residues Cys920, Cys923, Cys940, and Cys943 each coordinate Zn(2+).

Belongs to the class-I aminoacyl-tRNA synthetase family. IleS type 1 subfamily. As to quaternary structure, monomer. Zn(2+) serves as cofactor.

The protein resides in the cytoplasm. The catalysed reaction is tRNA(Ile) + L-isoleucine + ATP = L-isoleucyl-tRNA(Ile) + AMP + diphosphate. In terms of biological role, catalyzes the attachment of isoleucine to tRNA(Ile). As IleRS can inadvertently accommodate and process structurally similar amino acids such as valine, to avoid such errors it has two additional distinct tRNA(Ile)-dependent editing activities. One activity is designated as 'pretransfer' editing and involves the hydrolysis of activated Val-AMP. The other activity is designated 'posttransfer' editing and involves deacylation of mischarged Val-tRNA(Ile). The chain is Isoleucine--tRNA ligase from Laribacter hongkongensis (strain HLHK9).